The chain runs to 155 residues: MINEKADSLVNAFKELLSQESFGSQSEIVSALQQMGFTHVNQSKVSRMLTKFGAVRTRNTRMEMVYCLPNELSVPNTGSPLKNLVLDVDHNETLIVIKTSPGAAQLIARLLDSVGKSEGILGTIAGDDTIFVTPTTGNDIQVLITNIQKLFESSL.

This sequence belongs to the ArgR family.

It localises to the cytoplasm. It participates in amino-acid biosynthesis; L-arginine biosynthesis [regulation]. In terms of biological role, regulates arginine biosynthesis genes. The protein is Arginine repressor of Histophilus somni (strain 129Pt) (Haemophilus somnus).